The sequence spans 780 residues: Oocyte zinc finger protein XlCOF8.4 (780 aa).

15 C2H2-type zinc fingers span residues 250–272 (FPCSECGKCFAGSSELNVHRRTH), 278–300 (FSCSQCGKCFSNQTKLKYHHRTH), 306–328 (FSCSECGKCFSTPHVRARHQKTH), 334–356 (FPCSECGKCFARSSDVTVHRRTH), 362–384 (YSCSQCGKCFTRSSDLNVHRRTH), 390–412 (YSCSHCGKCFTTSSELNVHRRTH), 418–440 (YSCSECGKSFPTSSEFTSHWKTH), 446–468 (FSCVQCGKCFSKDTHLKYHYRTH), 474–496 (FSCFECGKCFTHNGSLKVHLKIH), 618–640 (LSCSECGKCFSTYHVLARHQKTH), 646–668 (FSCSECEKCYARSSDLNVHRRTH), 674–696 (YSCSECGKCFTRSSDFNVHRRTH), 702–724 (YSCSECGRCFPTSSVLTSHWRTH), 730–752 (FSCTECGKCFSRETYLKYHHRTH), and 758–780 (FSCSECGKCFTCNSSLKVHFQLH).

This sequence belongs to the krueppel C2H2-type zinc-finger protein family.

Its subcellular location is the nucleus. Its function is as follows. May be involved in transcriptional regulation. In Xenopus laevis (African clawed frog), this protein is Oocyte zinc finger protein XlCOF8.4.